The primary structure comprises 1134 residues: Myosin-4 (1134 aa).

Positions arginine 110 to proline 160 constitute a Myosin N-terminal SH3-like domain. Positions glutamate 164–lysine 830 constitute a Myosin motor domain. ATP-binding positions include glycine 255–threonine 262 and asparagine 304–lysine 312. Actin-binding regions lie at residues leucine 589 to leucine 623 and leucine 710 to serine 732. 3 consecutive IQ domains span residues valine 832 to isoleucine 861, methionine 855 to valine 884, and glutamate 891 to proline 920. The segment at serine 913–lysine 939 is disordered. The segment covering asparagine 918–lysine 933 has biased composition (basic residues). Residues leucine 953 to glutamate 999 adopt a coiled-coil conformation.

This sequence belongs to the TRAFAC class myosin-kinesin ATPase superfamily. Myosin family. Plant myosin class VIII subfamily. Homodimer.

Myosin heavy chain that is required for the cell cycle-regulated transport of various organelles and proteins for their segregation. Functions by binding with its tail domain to receptor proteins on organelles and exerting force with its N-terminal motor domain against actin filaments, thereby transporting its cargo along polarized actin cables. This chain is Myosin-4 (VIII-B), found in Arabidopsis thaliana (Mouse-ear cress).